The chain runs to 491 residues: Ketol-acid reductoisomerase (NADP(+)) (491 aa).

The KARI N-terminal Rossmann domain occupies 15 to 208 (AQLGKCRFMG…GGHRAGVLES (194 aa)). Residues 45–48 (CGAQ), Arg68, Arg76, Ser78, and 108–110 (DKQ) contribute to the NADP(+) site. His132 is a catalytic residue. Gly158 provides a ligand contact to NADP(+). KARI C-terminal knotted domains lie at 209-344 (SFVA…TAPQ) and 345-484 (FEGK…MTDM). Mg(2+) is bound by residues Asp217, Glu221, Glu389, and Glu393. Substrate is bound at residue Ser414.

Belongs to the ketol-acid reductoisomerase family. The cofactor is Mg(2+).

It catalyses the reaction (2R)-2,3-dihydroxy-3-methylbutanoate + NADP(+) = (2S)-2-acetolactate + NADPH + H(+). The catalysed reaction is (2R,3R)-2,3-dihydroxy-3-methylpentanoate + NADP(+) = (S)-2-ethyl-2-hydroxy-3-oxobutanoate + NADPH + H(+). Its pathway is amino-acid biosynthesis; L-isoleucine biosynthesis; L-isoleucine from 2-oxobutanoate: step 2/4. It participates in amino-acid biosynthesis; L-valine biosynthesis; L-valine from pyruvate: step 2/4. Functionally, involved in the biosynthesis of branched-chain amino acids (BCAA). Catalyzes an alkyl-migration followed by a ketol-acid reduction of (S)-2-acetolactate (S2AL) to yield (R)-2,3-dihydroxy-isovalerate. In the isomerase reaction, S2AL is rearranged via a Mg-dependent methyl migration to produce 3-hydroxy-3-methyl-2-ketobutyrate (HMKB). In the reductase reaction, this 2-ketoacid undergoes a metal-dependent reduction by NADPH to yield (R)-2,3-dihydroxy-isovalerate. This is Ketol-acid reductoisomerase (NADP(+)) from Salmonella agona (strain SL483).